A 189-amino-acid chain; its full sequence is MTEYKLVVVGAKGVGKSALTIQLIQNHFVDEYDPTIEDSYRKQVVIDGETCLLDILDTAGQEEYSAMRDQYMRTGEGFLCVFAINNTKSFEDIHQYREQIKRVKDSDDVPMVLVGNKCDLAARTVESRQAQDLARSYGIPYIKTSAKTRQGVEDAFYTLVREIRQHKLRKLNPPDESGPGCMSCKCVLS.

10–17 (GAKGVGKS) serves as a coordination point for GTP. Positions 32-40 (YDPTIEDSY) match the Effector region motif. GTP contacts are provided by residues 57 to 61 (DTAGQ) and 116 to 119 (NKCD). Residues C181 and C184 are each lipidated (S-palmitoyl cysteine; by host). At C186 the chain carries Cysteine methyl ester; by host. C186 carries the S-farnesyl cysteine; by host lipid modification. The propeptide at 187 to 189 (VLS) is removed in mature form.

It belongs to the small GTPase superfamily. Ras family.

The protein resides in the host cell membrane. It catalyses the reaction GTP + H2O = GDP + phosphate + H(+). Its activity is regulated as follows. Alternates between an inactive form bound to GDP and an active form bound to GTP. Activated by a guanine nucleotide-exchange factor (GEF) and inactivated by a GTPase-activating protein (GAP). This chain is GTPase HRas (H-RAS), found in Moloney murine sarcoma virus (MoMSV).